A 112-amino-acid chain; its full sequence is Large ribosomal subunit protein P2A (112 aa).

Residues 83 to 112 (GAAPAAEAKKEEKVEEKEESDDDMGFSLFD) are disordered. Over residues 89–98 (EAKKEEKVEE) the composition is skewed to basic and acidic residues.

It belongs to the eukaryotic ribosomal protein P1/P2 family. P1 and P2 exist as dimers at the large ribosomal subunit. In terms of processing, phosphorylated.

Its function is as follows. Plays an important role in the elongation step of protein synthesis. The sequence is that of Large ribosomal subunit protein P2A (RPP2A) from Zea mays (Maize).